The sequence spans 134 residues: MQSAKQKISDMASTAKEKMVICQAKADEKAERAMARTKEEKEIAHQRRKAKEAEANMDMHMAKAAHAEDKLMAKQSHYHVTDHGPHVPQQAPVPAPAPVMGHGYGHNPTGVTSVPPQTYHPTYPPTGHHNHHHY.

The segment covering 31–45 (ERAMARTKEEKEIAH) has biased composition (basic and acidic residues). Disordered stretches follow at residues 31 to 53 (ERAM…AKEA) and 80 to 134 (VTDH…HHHY). A coiled-coil region spans residues 34–70 (MARTKEEKEIAHQRRKAKEAEANMDMHMAKAAHAEDK). Residues 115–127 (PPQTYHPTYPPTG) are compositionally biased toward low complexity.

This sequence belongs to the LEA type 1 family.

Involved dehydration tolerance. Involved in the adaptive response of vascular plants to withstand water deficit. May possess chaperone-like activity under water deficit. This is Late embryogenesis abundant protein 6 from Arabidopsis thaliana (Mouse-ear cress).